Here is a 418-residue protein sequence, read N- to C-terminus: UDP-N-acetylglucosamine 1-carboxyvinyltransferase (418 aa).

Residue 22–23 (KN) coordinates phosphoenolpyruvate. Residue R92 coordinates UDP-N-acetyl-alpha-D-glucosamine. C116 serves as the catalytic Proton donor. C116 is subject to 2-(S-cysteinyl)pyruvic acid O-phosphothioketal. UDP-N-acetyl-alpha-D-glucosamine is bound by residues 121 to 125 (RPIDL), D305, and L327.

It belongs to the EPSP synthase family. MurA subfamily.

It is found in the cytoplasm. The catalysed reaction is phosphoenolpyruvate + UDP-N-acetyl-alpha-D-glucosamine = UDP-N-acetyl-3-O-(1-carboxyvinyl)-alpha-D-glucosamine + phosphate. It participates in cell wall biogenesis; peptidoglycan biosynthesis. Functionally, cell wall formation. Adds enolpyruvyl to UDP-N-acetylglucosamine. This chain is UDP-N-acetylglucosamine 1-carboxyvinyltransferase, found in Campylobacter jejuni subsp. jejuni serotype O:23/36 (strain 81-176).